The chain runs to 248 residues: Gamma-glutamyl peptidase 2 (248 aa).

The region spanning 17-212 (SEFVKEMYGG…IDRVHKIKFV (196 aa)) is the Glutamine amidotransferase type-1 domain. The active-site Nucleophile is the Cys101. Catalysis depends on residues His191 and Glu193.

It belongs to the peptidase C26 family.

The protein resides in the cytoplasm. Its subcellular location is the cytosol. The catalysed reaction is an S-[(1E)-1-(hydroxyimino)-omega-(methylsulfanyl)alkyl]-L-glutathione + H2O = an S-[(1E)-1-(hydroxyimino)-omega-(methylsulfanyl)alkyl]-L-cysteinylglycine + L-glutamate. The enzyme catalyses (E)-1-(glutathione-S-yl)-2-(1H-indol-3-yl)acetohydroximate + H2O = (E)-1-(glycyl-L-cystein-S-yl)-2-(1H-indol-3-yl)acetohydroximate + L-glutamate. It carries out the reaction 2-(glutathion-S-yl)-2-(1H-indol-3-yl)acetonitrile + H2O = 2-(glycyl-L-cystein-S-yl)-2-(1H-indol-3-yl)acetonitrile + L-glutamate. It catalyses the reaction (Z)-1-(glutathione-S-yl)-2-phenylacetohydroximate + H2O = (Z)-1-(glycyl-L-cystein-S-yl)-2-phenylacetohydroximate + L-glutamate. The protein operates within secondary metabolite biosynthesis. Involved in glucosinolate biosynthesis. Hydrolyzes the gamma-glutamyl peptide bond of several glutathione (GSH) conjugates to produce Cys-Gly conjugates related to glucosinolates. The gamma-Glu-Cys-Gly-GSH conjugates are the sulfur-donating molecule in glucosinolate biosynthesis. The protein is Gamma-glutamyl peptidase 2 of Arabidopsis thaliana (Mouse-ear cress).